The chain runs to 201 residues: MGNVDLAKLGAILVKNAITGETVEFQTLWKDNTSVIFFLRRFGCQICRWIAKDVSQLKESLDANQIRLIGIGPETVGLQEFLDGKYFTGELYLDESKQSYKELGFKRYNALSIVPAALGKKVRDIVTKANADGVQGNFSGDLLQSGGMLVVSKGGEKALLHFVQDSPGDFVPLDTLVTALGITADVTSSQRPECNDEVCTR.

Belongs to the peroxiredoxin-like PRXL2 family. Prostamide/prostaglandin F synthase subfamily.

It localises to the cytoplasm. Its subcellular location is the cytosol. It carries out the reaction prostaglandin H2 + [thioredoxin]-dithiol = prostaglandin F2alpha + [thioredoxin]-disulfide. The catalysed reaction is prostamide F2alpha + [thioredoxin]-disulfide = prostamide H2 + [thioredoxin]-dithiol. Catalyzes the reduction of prostaglandin-ethanolamide H(2) (prostamide H(2)) to prostamide F(2alpha) with NADPH as proton donor. Also able to reduce prostaglandin H(2) to prostaglandin F(2alpha). This chain is Prostamide/prostaglandin F synthase (prxl2b), found in Aquarana catesbeiana (American bullfrog).